The chain runs to 753 residues: Glycerophosphodiester phosphodiesterase GDPDL6 (753 aa).

A signal peptide spans 1–17 (MLRFFILFSLFLHSSVA). 2 consecutive GP-PDE domains span residues 41 to 339 (PAVV…SQSI) and 355 to 654 (ALVI…TRYL). N-linked (GlcNAc...) asparagine glycosylation is found at Asn-304, Asn-516, Asn-603, and Asn-715. A disordered region spans residues 707 to 729 (PPVAKLASNGTEGGPPQTPPRSG). Residues 731–751 (VAIAANLSLSLLAMMALGLLY) traverse the membrane as a helical segment.

Belongs to the glycerophosphoryl diester phosphodiesterase family. Expressed in flowers and siliques.

It is found in the membrane. The catalysed reaction is a sn-glycero-3-phosphodiester + H2O = an alcohol + sn-glycerol 3-phosphate + H(+). The polypeptide is Glycerophosphodiester phosphodiesterase GDPDL6 (Arabidopsis thaliana (Mouse-ear cress)).